A 157-amino-acid polypeptide reads, in one-letter code: 1,4-dihydroxy-2-naphthoyl-CoA thioesterase 2 (157 aa).

Residue E56 is part of the active site. A Microbody targeting signal motif is present at residues 154-156 (ISK).

It belongs to the 4-hydroxybenzoyl-CoA thioesterase family. DHNA-CoA hydrolase subfamily. In terms of assembly, homotetramers.

The protein localises to the peroxisome. It participates in cofactor biosynthesis; phylloquinone biosynthesis. Its pathway is quinol/quinone metabolism; 1,4-dihydroxy-2-naphthoate biosynthesis; 1,4-dihydroxy-2-naphthoate from chorismate: step 7/7. In terms of biological role, catalyzes the hydrolysis of the thioester bond of 1,4-dihydroxy-2-naphthoyl-CoA (DHNA-CoA) in peroxisomes, a necessary step to form the naphthoquinone ring of phylloquinone (vitamin K(1)). Displayed also slight thioesterase activity towards benzoyl-CoA. Is not active on phenylacetyl-CoA, succinyl-CoA and palmitoyl-CoA thioesters. This chain is 1,4-dihydroxy-2-naphthoyl-CoA thioesterase 2, found in Arabidopsis thaliana (Mouse-ear cress).